The sequence spans 196 residues: Probable GTP-binding protein EngB (196 aa).

One can recognise an EngB-type G domain in the interval 22–196 (NLPEIALSGR…GNWIEEKISK (175 aa)). Residues 30–37 (GRSNVGKS), 57–61 (GKTQT), 75–78 (DVPG), 142–145 (TKID), and 175–177 (FSS) each bind GTP. Mg(2+) contacts are provided by Ser37 and Thr59.

The protein belongs to the TRAFAC class TrmE-Era-EngA-EngB-Septin-like GTPase superfamily. EngB GTPase family. Mg(2+) is required as a cofactor.

Necessary for normal cell division and for the maintenance of normal septation. The polypeptide is Probable GTP-binding protein EngB (Lactobacillus helveticus (strain DPC 4571)).